A 190-amino-acid chain; its full sequence is UPF0200 protein MTH_434 (190 aa).

Gly-10–Gly-17 is an ATP binding site.

It belongs to the UPF0200 family.

The chain is UPF0200 protein MTH_434 from Methanothermobacter thermautotrophicus (strain ATCC 29096 / DSM 1053 / JCM 10044 / NBRC 100330 / Delta H) (Methanobacterium thermoautotrophicum).